The chain runs to 368 residues: DNA-directed RNA polymerase II subunit GRINL1A (368 aa).

The tract at residues 29–68 (KRQERLLRNEKFICKLPDKGKKIFDSFAKLKAAIAECEEV) is important for transcription repressor activity. Polar residues-rich tracts occupy residues 116–131 (SSVD…QNQG), 205–224 (GEQQ…LSSG), and 258–273 (QNDS…SPIS). 3 disordered regions span residues 116-186 (SSVD…DTSS), 203-227 (DQGE…GTEK), and 255-282 (PFRQ…RRDK). The interaction with Pol II stretch occupies residues 227–298 (KKPHYMEVLE…TAARLLPLHH (72 aa)). At S270 the chain carries Phosphoserine. Residues 299–314 (MPTQLLSIEESLALQK) are important for transcription repressor activity. A coiled-coil region spans residues 301–335 (TQLLSIEESLALQKQQKQNYEEMQAKLAAQKLAER). The segment at 315-340 (QQKQNYEEMQAKLAAQKLAERLNIKM) is interaction with Pol II. A disordered region spans residues 339-368 (KMRSYNPEGESSGRYREVRDEDDDWSSDEF). Over residues 358-368 (DEDDDWSSDEF) the composition is skewed to acidic residues.

This sequence belongs to the GRINL1 family. In terms of assembly, component of the Pol II(G) complex, which contains the RNA polymerase II (Pol II) core complex subunits and POLR2M isoform 1. Pol II(G) appears to be an abundant form of Pol II. In terms of processing, dephosphorylated at Ser-270 by the PNUTS-PP1 complex, promoting RNA polymerase II transcription pause-release. Detected in adult an fetal brain. Detected in heart, kidney, skeletal muscle, small intestine, lung, prostate and testis.

It localises to the nucleus. In terms of biological role, appears to be a stable component of the Pol II(G) complex form of RNA polymerase II (Pol II). Pol II synthesizes mRNA precursors and many functional non-coding RNAs and is the central component of the basal RNA polymerase II transcription machinery. May play a role in the Mediator complex-dependent regulation of transcription activation. Acts as a negative regulator of transcriptional activation; this repression is relieved by the Mediator complex, which restores Pol II(G) activator-dependent transcription to a level equivalent to that of Pol II. This is DNA-directed RNA polymerase II subunit GRINL1A (POLR2M) from Homo sapiens (Human).